The following is a 482-amino-acid chain: Putative ankyrin repeat protein FPV232 (482 aa).

ANK repeat units lie at residues 36–65 (IPLI…NVNE), 69–100 (RYLT…DLSS), 101–128 (YEER…DGNR), 129–161 (TIDD…DTKI), 166–195 (KLKT…EVNS), 199–228 (GNNS…NTDH), 232–265 (CGTT…SVNI), 270–297 (LGFT…DPNI), and 301–332 (EKET…LRAF).

This chain is Putative ankyrin repeat protein FPV232, found in Fowlpox virus (strain NVSL) (FPV).